The following is a 186-amino-acid chain: Peptidyl-tRNA hydrolase (186 aa).

Tyr-14 provides a ligand contact to tRNA. Catalysis depends on His-19, which acts as the Proton acceptor. TRNA is bound by residues Tyr-64, Asn-66, and Asn-112.

This sequence belongs to the PTH family. In terms of assembly, monomer.

The protein resides in the cytoplasm. It carries out the reaction an N-acyl-L-alpha-aminoacyl-tRNA + H2O = an N-acyl-L-amino acid + a tRNA + H(+). Functionally, hydrolyzes ribosome-free peptidyl-tRNAs (with 1 or more amino acids incorporated), which drop off the ribosome during protein synthesis, or as a result of ribosome stalling. Catalyzes the release of premature peptidyl moieties from peptidyl-tRNA molecules trapped in stalled 50S ribosomal subunits, and thus maintains levels of free tRNAs and 50S ribosomes. The polypeptide is Peptidyl-tRNA hydrolase (Bacillus cereus (strain ATCC 14579 / DSM 31 / CCUG 7414 / JCM 2152 / NBRC 15305 / NCIMB 9373 / NCTC 2599 / NRRL B-3711)).